The chain runs to 342 residues: DNA-directed RNA polymerase subunit alpha (342 aa).

The interval 1–239 (MTTFLAKNWS…DQLQVFINFQ (239 aa)) is alpha N-terminal domain (alpha-NTD). Positions 254–342 (INPVLLKKVY…SLAKKHEDQY (89 aa)) are alpha C-terminal domain (alpha-CTD).

Belongs to the RNA polymerase alpha chain family. Homodimer. The RNAP catalytic core consists of 2 alpha, 1 beta, 1 beta' and 1 omega subunit. When a sigma factor is associated with the core the holoenzyme is formed, which can initiate transcription.

It catalyses the reaction RNA(n) + a ribonucleoside 5'-triphosphate = RNA(n+1) + diphosphate. Its function is as follows. DNA-dependent RNA polymerase catalyzes the transcription of DNA into RNA using the four ribonucleoside triphosphates as substrates. In Orientia tsutsugamushi (strain Ikeda) (Rickettsia tsutsugamushi), this protein is DNA-directed RNA polymerase subunit alpha.